The following is a 106-amino-acid chain: Large ribosomal subunit protein uL24 (106 aa).

The protein belongs to the universal ribosomal protein uL24 family. As to quaternary structure, part of the 50S ribosomal subunit.

One of two assembly initiator proteins, it binds directly to the 5'-end of the 23S rRNA, where it nucleates assembly of the 50S subunit. Functionally, one of the proteins that surrounds the polypeptide exit tunnel on the outside of the subunit. In Bordetella avium (strain 197N), this protein is Large ribosomal subunit protein uL24.